The chain runs to 675 residues: Methionine--tRNA ligase (675 aa).

Positions 15-25 match the 'HIGH' region motif; sequence PYANGSIHLGH. C146, C149, C159, and C162 together coordinate Zn(2+). The 'KMSKS' region signature appears at 332–336; sequence KMSKS. Residue K335 coordinates ATP. Residues 573-675 form the tRNA-binding domain; it reads DFAKVDMRIA…SGAQPGMQVK (103 aa).

Belongs to the class-I aminoacyl-tRNA synthetase family. MetG type 1 subfamily. In terms of assembly, homodimer. Requires Zn(2+) as cofactor.

The protein localises to the cytoplasm. It catalyses the reaction tRNA(Met) + L-methionine + ATP = L-methionyl-tRNA(Met) + AMP + diphosphate. In terms of biological role, is required not only for elongation of protein synthesis but also for the initiation of all mRNA translation through initiator tRNA(fMet) aminoacylation. The protein is Methionine--tRNA ligase of Yersinia pseudotuberculosis serotype I (strain IP32953).